The primary structure comprises 163 residues: Urease accessory protein UreE (163 aa).

A disordered region spans residues 130 to 163 (PFEPEPGAYGGGHGHTHSHDHSHQHDPAGHAHEH). A compositionally biased stretch (basic and acidic residues) spans 146–163 (HSHDHSHQHDPAGHAHEH).

The protein belongs to the UreE family.

The protein localises to the cytoplasm. Involved in urease metallocenter assembly. Binds nickel. Probably functions as a nickel donor during metallocenter assembly. In Alkalilimnicola ehrlichii (strain ATCC BAA-1101 / DSM 17681 / MLHE-1), this protein is Urease accessory protein UreE.